The sequence spans 416 residues: Homogentisate 1,2-dioxygenase (416 aa).

His275 (proton acceptor) is an active-site residue. Positions 318 and 324 each coordinate Fe cation. Homogentisate-binding residues include Tyr333 and His354. His354 provides a ligand contact to Fe cation.

It belongs to the homogentisate dioxygenase family. Hexamer; dimer of trimers. Requires Fe cation as cofactor.

It catalyses the reaction homogentisate + O2 = 4-maleylacetoacetate + H(+). Its pathway is amino-acid degradation; L-phenylalanine degradation; acetoacetate and fumarate from L-phenylalanine: step 4/6. Its function is as follows. Involved in the catabolism of homogentisate (2,5-dihydroxyphenylacetate or 2,5-OH-PhAc), a central intermediate in the degradation of phenylalanine and tyrosine. Catalyzes the oxidative ring cleavage of the aromatic ring of homogentisate to yield maleylacetoacetate. This chain is Homogentisate 1,2-dioxygenase, found in Legionella pneumophila (strain Corby).